Here is a 217-residue protein sequence, read N- to C-terminus: 3-oxo-tetronate 4-phosphate decarboxylase (217 aa).

The Zn(2+) site is built by His-93 and His-95. Residue Tyr-120 is the Proton donor of the active site.

It belongs to the aldolase class II family. AraD/FucA subfamily. It depends on Zn(2+) as a cofactor.

The catalysed reaction is 3-dehydro-4-O-phospho-D-erythronate + H(+) = dihydroxyacetone phosphate + CO2. It catalyses the reaction 3-dehydro-4-O-phospho-L-erythronate + H(+) = dihydroxyacetone phosphate + CO2. Functionally, catalyzes the decarboxylation of 3-oxo-tetronate 4-phosphate to dihydroxyacetone phosphate (DHAP) and CO(2). In Cupriavidus necator (strain ATCC 17699 / DSM 428 / KCTC 22496 / NCIMB 10442 / H16 / Stanier 337) (Ralstonia eutropha), this protein is 3-oxo-tetronate 4-phosphate decarboxylase.